The chain runs to 354 residues: MTPAADGDDDETTCIRALELIFTFVVPMTLKATIKLGLLDALTGGGHALTADELAAAAQLPAEAASSVDRMLRLLASLDVVKCAPTDTGGEAAVRRYTPAPVCRWFAGERSLAPLAMFLLDDDYLSTWNQLPAAVAGGDGQVAFEKARGMPMFEYMGTNRRLNTLFNQAMVQQSTVVIGKLLERFQGFDGVSVLVDVGGGTGATLEMITSRYKNITGVNFDLPHVIAQAPSLPGVKHIAGNMFESVPNGDAIFLKSMLHLHNDEDCIKILKKCHQALTHNGKVIAVEILLPAIPEPVPTAQNPFRMDMIMLNNHWGGKERTEPEFAKLAVECGYTGVFQATYIFANYWALEFSK.

The S-adenosyl-L-homocysteine site is built by Gly-198, Asp-221, Met-242, and Lys-255. The active-site Proton acceptor is His-259. Catalysis depends on residues Glu-287 and Glu-319.

The protein belongs to the class I-like SAM-binding methyltransferase superfamily. Cation-independent O-methyltransferase family. COMT subfamily.

The polypeptide is Caffeate O-methyltransferase-like protein 2 (Oryza sativa subsp. japonica (Rice)).